A 163-amino-acid chain; its full sequence is Biotin carboxyl carrier protein of acetyl-CoA carboxylase (163 aa).

The Biotinyl-binding domain occupies 85–161; the sequence is GDFIVSPLVG…QFGSKLFRIV (77 aa). Position 127 is an N6-biotinyllysine (lysine 127).

Homodimer.

It participates in lipid metabolism; fatty acid biosynthesis. Functionally, this protein is a component of the acetyl coenzyme A carboxylase complex; first, biotin carboxylase catalyzes the carboxylation of the carrier protein and then the transcarboxylase transfers the carboxyl group to form malonyl-CoA. The polypeptide is Biotin carboxyl carrier protein of acetyl-CoA carboxylase (accB) (Chlamydia muridarum (strain MoPn / Nigg)).